The primary structure comprises 222 residues: UPF0758 protein YicR (222 aa).

Residues Pro-100 to Ile-222 form the MPN domain. His-171, His-173, and Asp-184 together coordinate Zn(2+). The JAMM motif signature appears at His-171–Asp-184.

Belongs to the UPF0758 family. YicR subfamily.

The protein is UPF0758 protein YicR of Escherichia coli (strain 55989 / EAEC).